Reading from the N-terminus, the 1275-residue chain is Probable Rho-type GTPase-activating protein 2 (1275 aa).

4 disordered regions span residues 118-146 (KYESTDSFPSSQPSRANSPQSDSYSSPYE), 213-238 (NTKRSHRSSEEPGASSPVTSPILKDS), 280-306 (SSFRRPITKPTPFNSDSNISIDPKDNN), and 335-365 (SSPRRKSISIVKPHGISSPKHSTNNLSSKSG). The span at 122 to 143 (TDSFPSSQPSRANSPQSDSYSS) shows a compositional bias: polar residues. Polar residues-rich tracts occupy residues 290–299 (TPFNSDSNIS) and 353–364 (PKHSTNNLSSKS). Phosphoserine is present on serine 388. Disordered stretches follow at residues 390 to 466 (IIEN…RSSF) and 539 to 561 (FSKSKSHNHHPSSQVEKSTSNSK). Composition is skewed to polar residues over residues 450–466 (SLSLQKTGSSDTRRSSF) and 552–561 (QVEKSTSNSK). The PH domain occupies 719–836 (HAQKEGVLLK…WLRAILRQVP (118 aa)). Positions 957-971 (ADTRRNQDAPEKHVP) are enriched in basic and acidic residues. 2 disordered regions span residues 957–988 (ADTRRNQDAPEKHVPVIEIQSSRPSLEKTDQS) and 1254–1275 (NGAQNESDSDVSDDNGEDNEFF). The Rho-GAP domain maps to 1065 to 1275 (LPLNEAVNIS…DDNGEDNEFF (211 aa)). Residues 1260–1275 (SDSDVSDDNGEDNEFF) show a composition bias toward acidic residues.

Its subcellular location is the nucleus. Functionally, GTPase-activating protein for Rho-type proteins. This is Probable Rho-type GTPase-activating protein 2 (rga2) from Schizosaccharomyces pombe (strain 972 / ATCC 24843) (Fission yeast).